An 86-amino-acid polypeptide reads, in one-letter code: UPF0335 protein BR1752/BS1330_I1746 (86 aa).

The protein belongs to the UPF0335 family.

The sequence is that of UPF0335 protein BR1752/BS1330_I1746 from Brucella suis biovar 1 (strain 1330).